Here is a 181-residue protein sequence, read N- to C-terminus: Protein Syd (181 aa).

The protein belongs to the Syd family.

The protein resides in the cell inner membrane. Its function is as follows. Interacts with the SecY protein in vivo. May bind preferentially to an uncomplexed state of SecY, thus functioning either as a chelating agent for excess SecY in the cell or as a regulatory factor that negatively controls the translocase function. The protein is Protein Syd of Enterobacter sp. (strain 638).